Reading from the N-terminus, the 505-residue chain is Glutamate--tRNA ligase (505 aa).

Residues 12–22 (PSPTGDPHVGT) carry the 'HIGH' region motif. Residues 253–257 (KLSKR) carry the 'KMSKS' region motif. K256 lines the ATP pocket.

It belongs to the class-I aminoacyl-tRNA synthetase family. Glutamate--tRNA ligase type 1 subfamily. In terms of assembly, monomer.

It localises to the cytoplasm. The catalysed reaction is tRNA(Glu) + L-glutamate + ATP = L-glutamyl-tRNA(Glu) + AMP + diphosphate. Its function is as follows. Catalyzes the attachment of glutamate to tRNA(Glu) in a two-step reaction: glutamate is first activated by ATP to form Glu-AMP and then transferred to the acceptor end of tRNA(Glu). The chain is Glutamate--tRNA ligase from Chlamydia pneumoniae (Chlamydophila pneumoniae).